Reading from the N-terminus, the 253-residue chain is Ribonuclease HII (253 aa).

In terms of domain architecture, RNase H type-2 spans 70-253 (DLIAGVDEVG…KTFAPIKDIL (184 aa)). A divalent metal cation-binding residues include aspartate 76, glutamate 77, and aspartate 168.

The protein belongs to the RNase HII family. The cofactor is Mn(2+). Mg(2+) is required as a cofactor.

It is found in the cytoplasm. The catalysed reaction is Endonucleolytic cleavage to 5'-phosphomonoester.. In terms of biological role, endonuclease that specifically degrades the RNA of RNA-DNA hybrids. This Leuconostoc mesenteroides subsp. mesenteroides (strain ATCC 8293 / DSM 20343 / BCRC 11652 / CCM 1803 / JCM 6124 / NCDO 523 / NBRC 100496 / NCIMB 8023 / NCTC 12954 / NRRL B-1118 / 37Y) protein is Ribonuclease HII.